The following is a 363-amino-acid chain: tRNA/tmRNA (uracil-C(5))-methyltransferase (363 aa).

5 residues coordinate S-adenosyl-L-methionine: Gln187, Tyr215, Asn220, Glu236, and Asp296. The active-site Nucleophile is Cys321. Residue Glu355 is the Proton acceptor of the active site.

This sequence belongs to the class I-like SAM-binding methyltransferase superfamily. RNA M5U methyltransferase family. TrmA subfamily.

It carries out the reaction uridine(54) in tRNA + S-adenosyl-L-methionine = 5-methyluridine(54) in tRNA + S-adenosyl-L-homocysteine + H(+). The catalysed reaction is uridine(341) in tmRNA + S-adenosyl-L-methionine = 5-methyluridine(341) in tmRNA + S-adenosyl-L-homocysteine + H(+). In terms of biological role, dual-specificity methyltransferase that catalyzes the formation of 5-methyluridine at position 54 (m5U54) in all tRNAs, and that of position 341 (m5U341) in tmRNA (transfer-mRNA). The protein is tRNA/tmRNA (uracil-C(5))-methyltransferase of Pseudomonas paraeruginosa (strain DSM 24068 / PA7) (Pseudomonas aeruginosa (strain PA7)).